Here is a 199-residue protein sequence, read N- to C-terminus: Recombination protein RecR (199 aa).

A C4-type zinc finger spans residues 57–72 (CQSCRTYTEESLCPIC). The Toprim domain maps to 81 to 176 (STICVVETPA…VISRIAHGVP (96 aa)).

This sequence belongs to the RecR family.

Its function is as follows. May play a role in DNA repair. It seems to be involved in an RecBC-independent recombinational process of DNA repair. It may act with RecF and RecO. The chain is Recombination protein RecR from Shewanella sp. (strain MR-4).